A 358-amino-acid polypeptide reads, in one-letter code: UDP-N-acetylglucosamine--N-acetylmuramyl-(pentapeptide) pyrophosphoryl-undecaprenol N-acetylglucosamine transferase (358 aa).

UDP-N-acetyl-alpha-D-glucosamine-binding positions include 11–13, Arg163, Ser191, Ile245, and Gln290; that span reads TGG.

The protein belongs to the glycosyltransferase 28 family. MurG subfamily.

Its subcellular location is the cell inner membrane. It catalyses the reaction di-trans,octa-cis-undecaprenyl diphospho-N-acetyl-alpha-D-muramoyl-L-alanyl-D-glutamyl-meso-2,6-diaminopimeloyl-D-alanyl-D-alanine + UDP-N-acetyl-alpha-D-glucosamine = di-trans,octa-cis-undecaprenyl diphospho-[N-acetyl-alpha-D-glucosaminyl-(1-&gt;4)]-N-acetyl-alpha-D-muramoyl-L-alanyl-D-glutamyl-meso-2,6-diaminopimeloyl-D-alanyl-D-alanine + UDP + H(+). It participates in cell wall biogenesis; peptidoglycan biosynthesis. Its function is as follows. Cell wall formation. Catalyzes the transfer of a GlcNAc subunit on undecaprenyl-pyrophosphoryl-MurNAc-pentapeptide (lipid intermediate I) to form undecaprenyl-pyrophosphoryl-MurNAc-(pentapeptide)GlcNAc (lipid intermediate II). The protein is UDP-N-acetylglucosamine--N-acetylmuramyl-(pentapeptide) pyrophosphoryl-undecaprenol N-acetylglucosamine transferase of Herminiimonas arsenicoxydans.